The primary structure comprises 334 residues: RNA 3'-terminal phosphate cyclase (334 aa).

Position 279–282 (H279–D282) interacts with ATP. The active-site Tele-AMP-histidine intermediate is H303.

It belongs to the RNA 3'-terminal cyclase family. Type 1 subfamily.

The protein resides in the cytoplasm. It catalyses the reaction a 3'-end 3'-phospho-ribonucleotide-RNA + ATP = a 3'-end 2',3'-cyclophospho-ribonucleotide-RNA + AMP + diphosphate. Functionally, catalyzes the conversion of 3'-phosphate to a 2',3'-cyclic phosphodiester at the end of RNA. The mechanism of action of the enzyme occurs in 3 steps: (A) adenylation of the enzyme by ATP; (B) transfer of adenylate to an RNA-N3'P to produce RNA-N3'PP5'A; (C) and attack of the adjacent 2'-hydroxyl on the 3'-phosphorus in the diester linkage to produce the cyclic end product. The biological role of this enzyme is unknown but it is likely to function in some aspects of cellular RNA processing. The chain is RNA 3'-terminal phosphate cyclase from Metallosphaera sedula (strain ATCC 51363 / DSM 5348 / JCM 9185 / NBRC 15509 / TH2).